The following is a 967-amino-acid chain: Serine/threonine-protein kinase/endoribonuclease ire-1 (967 aa).

The signal sequence occupies residues 1 to 21 (MRATFHLFTFIFLLLFSSVIC). Topologically, residues 22–438 (ISTPGFRNDH…LLLLNNHPIP (417 aa)) are lumenal. N-linked (GlcNAc...) asparagine glycosylation is found at asparagine 100 and asparagine 188. Residues 439-455 (FYATLVTMFALLLTVIW) traverse the membrane as a helical segment. Residues 456–967 (QCGRQWDQQK…IKKKSNPNTD (512 aa)) are Cytoplasmic-facing. The disordered stretch occupies residues 474–494 (EIVNNPGESRSAQTSKQSNRG). The segment covering 479 to 494 (PGESRSAQTSKQSNRG) has biased composition (polar residues). The Protein kinase domain maps to 518 to 778 (YSPSDILGTG…ADAVLNHPFF (261 aa)). ATP is bound by residues 524–532 (LGTGCEGTV) and lysine 546. Aspartate 636 functions as the Proton acceptor in the catalytic mechanism. Position 672 is a phosphoserine; by autocatalysis (serine 672). A KEN domain is found at 781-909 (SEKRLAYFSD…EAVFKRYYSD (129 aa)). A disordered region spans residues 948–967 (RTPLKLDKRNIKKKSNPNTD). The span at 957-967 (NIKKKSNPNTD) shows a compositional bias: basic residues.

It belongs to the protein kinase superfamily. Ser/Thr protein kinase family. Mg(2+) is required as a cofactor. Post-translationally, autophosphorylated mainly on serine residues.

It is found in the endoplasmic reticulum membrane. It carries out the reaction L-seryl-[protein] + ATP = O-phospho-L-seryl-[protein] + ADP + H(+). It catalyses the reaction L-threonyl-[protein] + ATP = O-phospho-L-threonyl-[protein] + ADP + H(+). Its activity is regulated as follows. The kinase domain is activated by trans-autophosphorylation. Kinase activity is required for activation of the endoribonuclease domain. In terms of biological role, senses unfolded proteins in the lumen of the endoplasmic reticulum via its N-terminal domain which leads to enzyme auto-activation. The active endoribonuclease domain splices xbp-1 precursor mRNA to produce the mature form which then induces transcription of UPR target genes. Unfolded protein response (UPR) transcriptional activation by ire-1, as well as translational attenuation by pek-1 in a complementary pathway, maintains ER homeostasis. Regulates the transcriptional up-regulation of nucleoside-diphosphatase apy-1 and many other genes, upon ER stress. By activating the UPR pathway during non-lethal hypoxia pre-conditioning, confers adaptive protection to subsequent exposure to hypoxia. ire-1 and pek-1 are redundant genes that control a pathway essential for larval development and survival. Plays a role in the nuclear retention of unspliced mRNAs. The protein is Serine/threonine-protein kinase/endoribonuclease ire-1 of Caenorhabditis elegans.